An 856-amino-acid chain; its full sequence is Rab effector MyRIP (856 aa).

The 121-residue stretch at 4-124 folds into the RabBD domain; that stretch reads KLDLSGLTDD…TQSLEWFYNN (121 aa). The FYVE-type zinc-finger motif lies at 63–105; that stretch reads CCMRCCSPFTFLVNARRRCGECKFSVCKSCCSYQKHEKLWVCC. The segment at 143–560 is myosin-binding; sequence RKHRLESGAC…AQVSDNVSET (418 aa). Residues 193 to 209 form a PRKAR2A-binding region; sequence VALRVAEEAIEEAISKA. Residues 232–248 are negative regulation of PRKAR2A-binding; the sequence is LTEELAGTILQRIIRKQ. Residues 252 to 294 are disordered; sequence AELRAEEEEPEWPRSQSGSVKARGEGTTAPPGRHKARATFRRS. Ser-299 and Ser-351 each carry phosphoserine. 4 disordered regions span residues 351 to 578, 592 to 625, 778 to 806, and 826 to 856; these read SPDG…SVEE, SEKE…NNQG, RRDQ…PPVK, and LLQG…AVMY. Residues 395 to 405 show a composition bias toward acidic residues; that stretch reads IGSDSEEDFDY. Composition is skewed to low complexity over residues 427 to 437 and 450 to 460; these read PTQAQSSGQGP and SDSETSSTSSS. The tract at residues 495-856 is actin-binding; it reads FNPQAAGGET…EPDLESAVMY (362 aa). Polar residues-rich tracts occupy residues 551–574, 613–625, 784–793, and 826–840; these read AQVS…SSTD, QKGS…NNQG, RSQVQTIDTS, and LLQG…ASTG.

Binds RAB27A that has been activated by GTP-binding via its N-terminus. Binds MYO5A, MYO7A and F-actin. Interacts with PRKAR2A. Interacts with components of the exocyst complex, including EXOC3 and EXOC4. As to expression, detected in brain, skin, heart, lung, adrenal medulla, pancreas, intestine, liver, kidney, skeletal muscle and testis. Detected in cochlear and vestibular hair cells in the inner ear, and in photoreceptor and pigment epithelium cells in the retina.

It localises to the cytoplasm. The protein localises to the perinuclear region. The protein resides in the cytoplasmic vesicle. Its subcellular location is the secretory vesicle. It is found in the melanosome. In terms of biological role, rab effector protein involved in melanosome transport. Serves as link between melanosome-bound RAB27A and the motor proteins MYO5A and MYO7A. May link RAB27A-containing vesicles to actin filaments. Functions as a protein kinase A-anchoring protein (AKAP). May act as a scaffolding protein that links PKA to components of the exocytosis machinery, thus facilitating exocytosis, including insulin release. The polypeptide is Rab effector MyRIP (Myrip) (Mus musculus (Mouse)).